We begin with the raw amino-acid sequence, 355 residues long: UDP-N-acetylglucosamine--N-acetylmuramyl-(pentapeptide) pyrophosphoryl-undecaprenol N-acetylglucosamine transferase (355 aa).

UDP-N-acetyl-alpha-D-glucosamine contacts are provided by residues 13 to 15 (TGG), Asn-125, Arg-162, Ser-190, Ile-244, and Gln-289.

It belongs to the glycosyltransferase 28 family. MurG subfamily.

It is found in the cell inner membrane. It catalyses the reaction di-trans,octa-cis-undecaprenyl diphospho-N-acetyl-alpha-D-muramoyl-L-alanyl-D-glutamyl-meso-2,6-diaminopimeloyl-D-alanyl-D-alanine + UDP-N-acetyl-alpha-D-glucosamine = di-trans,octa-cis-undecaprenyl diphospho-[N-acetyl-alpha-D-glucosaminyl-(1-&gt;4)]-N-acetyl-alpha-D-muramoyl-L-alanyl-D-glutamyl-meso-2,6-diaminopimeloyl-D-alanyl-D-alanine + UDP + H(+). It participates in cell wall biogenesis; peptidoglycan biosynthesis. Its function is as follows. Cell wall formation. Catalyzes the transfer of a GlcNAc subunit on undecaprenyl-pyrophosphoryl-MurNAc-pentapeptide (lipid intermediate I) to form undecaprenyl-pyrophosphoryl-MurNAc-(pentapeptide)GlcNAc (lipid intermediate II). The chain is UDP-N-acetylglucosamine--N-acetylmuramyl-(pentapeptide) pyrophosphoryl-undecaprenol N-acetylglucosamine transferase from Neisseria gonorrhoeae (strain ATCC 700825 / FA 1090).